A 217-amino-acid chain; its full sequence is 3,4-dihydroxy-2-butanone 4-phosphate synthase (217 aa).

D-ribulose 5-phosphate contacts are provided by residues R37–E38, D42, R150–T154, and E174. Mg(2+) is bound at residue E38. H153 contacts Mg(2+).

Belongs to the DHBP synthase family. In terms of assembly, homodimer. The cofactor is Mg(2+). It depends on Mn(2+) as a cofactor.

It catalyses the reaction D-ribulose 5-phosphate = (2S)-2-hydroxy-3-oxobutyl phosphate + formate + H(+). The protein operates within cofactor biosynthesis; riboflavin biosynthesis; 2-hydroxy-3-oxobutyl phosphate from D-ribulose 5-phosphate: step 1/1. Functionally, catalyzes the conversion of D-ribulose 5-phosphate to formate and 3,4-dihydroxy-2-butanone 4-phosphate. This is 3,4-dihydroxy-2-butanone 4-phosphate synthase from Klebsiella pneumoniae (strain 342).